The primary structure comprises 740 residues: Dipeptidyl peptidase family member 6 (740 aa).

Position 1 (Met1) is a topological domain, cytoplasmic. A helical; Signal-anchor for type II membrane protein membrane pass occupies residues 2 to 22; sequence LFLPILILNLLIITHAIDIIP. Over 23-740 the chain is Lumenal; that stretch reads REVLFQDPKY…VMNRIFPVQG (718 aa). 3 N-linked (GlcNAc...) asparagine glycosylation sites follow: Asn108, Asn308, and Asn506. Catalysis depends on charge relay system residues Ser516, Asp604, and His636. Cysteines 535 and 658 form a disulfide. N-linked (GlcNAc...) asparagine glycosylation occurs at Asn672.

Belongs to the peptidase S9B family. DPPIV subfamily.

It is found in the cell membrane. Its function is as follows. Removes N-terminal dipeptides sequentially from polypeptides. Essential for control of distal tip cell migration. The polypeptide is Dipeptidyl peptidase family member 6 (dpf-6) (Caenorhabditis elegans).